The following is a 117-amino-acid chain: Large ribosomal subunit protein bL20 (117 aa).

It belongs to the bacterial ribosomal protein bL20 family.

In terms of biological role, binds directly to 23S ribosomal RNA and is necessary for the in vitro assembly process of the 50S ribosomal subunit. It is not involved in the protein synthesizing functions of that subunit. The sequence is that of Large ribosomal subunit protein bL20 from Ruminiclostridium cellulolyticum (strain ATCC 35319 / DSM 5812 / JCM 6584 / H10) (Clostridium cellulolyticum).